Here is a 215-residue protein sequence, read N- to C-terminus: MOB kinase activator-like 1A (215 aa).

The tract at residues 1–29 (MSLFGLGSRNQKTFRPKKSAPTGSKGAQL) is disordered. Positions 80, 85, 162, and 167 each coordinate Zn(2+).

The protein belongs to the MOB1/phocein family. In terms of tissue distribution, isoform 1 is constitutively expressed. Isoform 2 is specifically expressed in flowers bud during sporogenesis and gametogenesis.

It is found in the cytoplasm. The protein resides in the cytoskeleton. It localises to the phragmoplast. This Medicago sativa subsp. falcata (Sickle medic) protein is MOB kinase activator-like 1A.